Consider the following 212-residue polypeptide: Adenylate kinase (212 aa).

10–15 lines the ATP pocket; the sequence is GAGKGT. Residues 30-59 are NMP; that stretch reads STGDMFRAAIANQTEMGVLAKSYIDKGELV. AMP is bound by residues Thr31, Arg36, 57–59, 86–89, and Gln93; these read ELV and GYPR. The interval 127 to 159 is LID; sequence GRIIHRETGETFHKVFNPPADYKEEDYYQREDD. ATP-binding positions include Arg128 and 137-138; that span reads TF. Arg156 and Arg167 together coordinate AMP. Gln195 contacts ATP.

It belongs to the adenylate kinase family. Monomer.

Its subcellular location is the cytoplasm. It catalyses the reaction AMP + ATP = 2 ADP. Its pathway is purine metabolism; AMP biosynthesis via salvage pathway; AMP from ADP: step 1/1. Its function is as follows. Catalyzes the reversible transfer of the terminal phosphate group between ATP and AMP. Plays an important role in cellular energy homeostasis and in adenine nucleotide metabolism. The chain is Adenylate kinase from Streptococcus sanguinis (strain SK36).